Reading from the N-terminus, the 51-residue chain is Insulin (51 aa).

3 disulfides stabilise this stretch: cysteine 7–cysteine 37, cysteine 19–cysteine 50, and cysteine 36–cysteine 41.

The protein belongs to the insulin family. As to quaternary structure, heterodimer of a B chain and an A chain linked by two disulfide bonds.

It localises to the secreted. Functionally, insulin decreases blood glucose concentration. It increases cell permeability to monosaccharides, amino acids and fatty acids. It accelerates glycolysis, the pentose phosphate cycle, and glycogen synthesis in liver. The chain is Insulin (INS) from Didelphis virginiana (North American opossum).